Consider the following 710-residue polypeptide: Probable GTP diphosphokinase RSH2, chloroplastic (710 aa).

The transit peptide at 1 to 63 (MVVATTIALY…SSLFSSASVK (63 aa)) directs the protein to the chloroplast. Residues 233-337 (YLQHCVETAM…IKLADRLHNM (105 aa)) enclose the HD domain.

Belongs to the RelA/SpoT family.

Its subcellular location is the plastid. It localises to the chloroplast. The catalysed reaction is GTP + ATP = guanosine 3'-diphosphate 5'-triphosphate + AMP. Functionally, probable ppGpp (guanosine 3'-diphosphate 5'-diphosphate) synthetase that may be involved in a rapid plant ppGpp-mediated response to pathogens and other stresses. This is Probable GTP diphosphokinase RSH2, chloroplastic (RSH2) from Arabidopsis thaliana (Mouse-ear cress).